The primary structure comprises 347 residues: UDP-3-O-acylglucosamine N-acyltransferase (347 aa).

The active-site Proton acceptor is His-241.

The protein belongs to the transferase hexapeptide repeat family. LpxD subfamily. As to quaternary structure, homotrimer.

It catalyses the reaction a UDP-3-O-[(3R)-3-hydroxyacyl]-alpha-D-glucosamine + a (3R)-hydroxyacyl-[ACP] = a UDP-2-N,3-O-bis[(3R)-3-hydroxyacyl]-alpha-D-glucosamine + holo-[ACP] + H(+). It functions in the pathway bacterial outer membrane biogenesis; LPS lipid A biosynthesis. Catalyzes the N-acylation of UDP-3-O-acylglucosamine using 3-hydroxyacyl-ACP as the acyl donor. Is involved in the biosynthesis of lipid A, a phosphorylated glycolipid that anchors the lipopolysaccharide to the outer membrane of the cell. The sequence is that of UDP-3-O-acylglucosamine N-acyltransferase from Neisseria gonorrhoeae (strain NCCP11945).